The chain runs to 394 residues: Ribulose bisphosphate carboxylase large chain (394 aa).

Lys5 bears the N6,N6,N6-trimethyllysine mark. Residues Asn114 and Thr164 each coordinate substrate. Lys166 acts as the Proton acceptor in catalysis. A substrate-binding site is contributed by Lys168. Residues Lys192, Asp194, and Glu195 each contribute to the Mg(2+) site. At Lys192 the chain carries N6-carboxylysine. The Proton acceptor role is filled by His285. Substrate-binding residues include Arg286, His318, and Ser370.

It belongs to the RuBisCO large chain family. Type I subfamily. Heterohexadecamer of 8 large chains and 8 small chains; disulfide-linked. The disulfide link is formed within the large subunit homodimers. Mg(2+) is required as a cofactor. Post-translationally, the disulfide bond which can form in the large chain dimeric partners within the hexadecamer appears to be associated with oxidative stress and protein turnover.

The protein resides in the plastid. Its subcellular location is the chloroplast. It catalyses the reaction 2 (2R)-3-phosphoglycerate + 2 H(+) = D-ribulose 1,5-bisphosphate + CO2 + H2O. The enzyme catalyses D-ribulose 1,5-bisphosphate + O2 = 2-phosphoglycolate + (2R)-3-phosphoglycerate + 2 H(+). In terms of biological role, ruBisCO catalyzes two reactions: the carboxylation of D-ribulose 1,5-bisphosphate, the primary event in carbon dioxide fixation, as well as the oxidative fragmentation of the pentose substrate in the photorespiration process. Both reactions occur simultaneously and in competition at the same active site. The sequence is that of Ribulose bisphosphate carboxylase large chain (rbcL) from Alisma plantago-aquatica (Common water-plantain).